The chain runs to 914 residues: Protein translocase subunit SecA (914 aa).

Residues Gln87, 105-109 (GEGKT), and Asp508 contribute to the ATP site. Residues Cys898, Cys900, Cys909, and His910 each coordinate Zn(2+).

The protein belongs to the SecA family. As to quaternary structure, monomer and homodimer. Part of the essential Sec protein translocation apparatus which comprises SecA, SecYEG and auxiliary proteins SecDF-YajC and YidC. Zn(2+) is required as a cofactor.

Its subcellular location is the cell inner membrane. The protein resides in the cytoplasm. It catalyses the reaction ATP + H2O + cellular proteinSide 1 = ADP + phosphate + cellular proteinSide 2.. Its function is as follows. Part of the Sec protein translocase complex. Interacts with the SecYEG preprotein conducting channel. Has a central role in coupling the hydrolysis of ATP to the transfer of proteins into and across the cell membrane, serving both as a receptor for the preprotein-SecB complex and as an ATP-driven molecular motor driving the stepwise translocation of polypeptide chains across the membrane. This Xylella fastidiosa (strain M12) protein is Protein translocase subunit SecA.